The chain runs to 457 residues: Cysteine--tRNA ligase (457 aa).

Residue Cys-27 coordinates Zn(2+). Positions 29-39 (ITPQSEPHIGH) match the 'HIGH' region motif. The Zn(2+) site is built by Cys-207, His-232, and Glu-236. The 'KMSKS' region motif lies at 265–269 (KMSKS). Lys-268 is an ATP binding site.

Belongs to the class-I aminoacyl-tRNA synthetase family. Monomer. Zn(2+) is required as a cofactor.

The protein resides in the cytoplasm. The enzyme catalyses tRNA(Cys) + L-cysteine + ATP = L-cysteinyl-tRNA(Cys) + AMP + diphosphate. The polypeptide is Cysteine--tRNA ligase (Dehalococcoides mccartyi (strain ATCC BAA-2100 / JCM 16839 / KCTC 5957 / BAV1)).